A 725-amino-acid polypeptide reads, in one-letter code: IML2-like protein YKR018C (725 aa).

Thr196 carries the phosphothreonine modification. Phosphoserine is present on residues Ser246, Ser377, and Ser380.

It belongs to the IML2 family.

It is found in the cytoplasm. The protein resides in the nucleus. This chain is IML2-like protein YKR018C, found in Saccharomyces cerevisiae (strain ATCC 204508 / S288c) (Baker's yeast).